A 260-amino-acid chain; its full sequence is MTSLKLLKKKAPLVICITNDVVKNFTANGLVALGASPAMSEFPADLEDLLKYAGGLLINIGTLTDENWKLYQAALKIAEKYNVPAVLDPVACGAGEYRKKVADDLINNYKLAAIRGNAGEIASLVGIDVASKGVDSAGVDNIDEIALAANEKFNIPIVVTGEVDAIAVNGEVVTIHNGSAMMPKVIGTGCLLGAVVASFIGLEKGQELKSLETAMLVYNIAGEMAEKRPNGHLPGTFKVEFINALYEITDEDVKEFKRVK.

A substrate-binding site is contributed by methionine 39. ATP is bound by residues arginine 115 and threonine 160. Residue glycine 187 participates in substrate binding.

The protein belongs to the Thz kinase family. The cofactor is Mg(2+).

The enzyme catalyses 5-(2-hydroxyethyl)-4-methylthiazole + ATP = 4-methyl-5-(2-phosphooxyethyl)-thiazole + ADP + H(+). It functions in the pathway cofactor biosynthesis; thiamine diphosphate biosynthesis; 4-methyl-5-(2-phosphoethyl)-thiazole from 5-(2-hydroxyethyl)-4-methylthiazole: step 1/1. Functionally, catalyzes the phosphorylation of the hydroxyl group of 4-methyl-5-beta-hydroxyethylthiazole (THZ). The protein is Hydroxyethylthiazole kinase 1 of Streptococcus pneumoniae serotype 19F (strain G54).